A 227-amino-acid chain; its full sequence is Cytochrome c oxidase subunit 2 (227 aa).

Over methionine 1–serine 14 the chain is Mitochondrial intermembrane. A helical membrane pass occupies residues proline 15–methionine 45. Topologically, residues leucine 46–glutamine 59 are mitochondrial matrix. The helical transmembrane segment at glutamate 60–methionine 87 threads the bilayer. Residues aspartate 88–alanine 227 lie on the Mitochondrial intermembrane side of the membrane. Residues histidine 161, cysteine 196, glutamate 198, cysteine 200, histidine 204, and methionine 207 each contribute to the Cu cation site. Glutamate 198 is a Mg(2+) binding site. Tyrosine 218 carries the phosphotyrosine modification.

The protein belongs to the cytochrome c oxidase subunit 2 family. Component of the cytochrome c oxidase (complex IV, CIV), a multisubunit enzyme composed of 14 subunits. The complex is composed of a catalytic core of 3 subunits MT-CO1, MT-CO2 and MT-CO3, encoded in the mitochondrial DNA, and 11 supernumerary subunits COX4I, COX5A, COX5B, COX6A, COX6B, COX6C, COX7A, COX7B, COX7C, COX8 and NDUFA4, which are encoded in the nuclear genome. The complex exists as a monomer or a dimer and forms supercomplexes (SCs) in the inner mitochondrial membrane with NADH-ubiquinone oxidoreductase (complex I, CI) and ubiquinol-cytochrome c oxidoreductase (cytochrome b-c1 complex, complex III, CIII), resulting in different assemblies (supercomplex SCI(1)III(2)IV(1) and megacomplex MCI(2)III(2)IV(2)). Found in a complex with TMEM177, COA6, COX18, COX20, SCO1 and SCO2. Interacts with TMEM177 in a COX20-dependent manner. Interacts with COX20. Interacts with COX16. It depends on Cu cation as a cofactor.

The protein resides in the mitochondrion inner membrane. It carries out the reaction 4 Fe(II)-[cytochrome c] + O2 + 8 H(+)(in) = 4 Fe(III)-[cytochrome c] + 2 H2O + 4 H(+)(out). Its function is as follows. Component of the cytochrome c oxidase, the last enzyme in the mitochondrial electron transport chain which drives oxidative phosphorylation. The respiratory chain contains 3 multisubunit complexes succinate dehydrogenase (complex II, CII), ubiquinol-cytochrome c oxidoreductase (cytochrome b-c1 complex, complex III, CIII) and cytochrome c oxidase (complex IV, CIV), that cooperate to transfer electrons derived from NADH and succinate to molecular oxygen, creating an electrochemical gradient over the inner membrane that drives transmembrane transport and the ATP synthase. Cytochrome c oxidase is the component of the respiratory chain that catalyzes the reduction of oxygen to water. Electrons originating from reduced cytochrome c in the intermembrane space (IMS) are transferred via the dinuclear copper A center (CU(A)) of subunit 2 and heme A of subunit 1 to the active site in subunit 1, a binuclear center (BNC) formed by heme A3 and copper B (CU(B)). The BNC reduces molecular oxygen to 2 water molecules using 4 electrons from cytochrome c in the IMS and 4 protons from the mitochondrial matrix. The protein is Cytochrome c oxidase subunit 2 (MT-CO2) of Mammuthus primigenius (Siberian woolly mammoth).